The following is a 238-amino-acid chain: Transcription termination/antitermination protein NusG (238 aa).

This sequence belongs to the NusG family.

In terms of biological role, participates in transcription elongation, termination and antitermination. This chain is Transcription termination/antitermination protein NusG, found in Mycobacterium tuberculosis (strain CDC 1551 / Oshkosh).